A 329-amino-acid polypeptide reads, in one-letter code: DNA-directed RNA polymerase subunit alpha (329 aa).

Residues 1-235 form an alpha N-terminal domain (alpha-NTD) region; that stretch reads MQGSVTEFLK…EQLDAFVDLR (235 aa). Residues 249 to 329 form an alpha C-terminal domain (alpha-CTD) region; the sequence is FDPILLRPVD…NWPPASIAED (81 aa).

The protein belongs to the RNA polymerase alpha chain family. In terms of assembly, homodimer. The RNAP catalytic core consists of 2 alpha, 1 beta, 1 beta' and 1 omega subunit. When a sigma factor is associated with the core the holoenzyme is formed, which can initiate transcription.

It catalyses the reaction RNA(n) + a ribonucleoside 5'-triphosphate = RNA(n+1) + diphosphate. Its function is as follows. DNA-dependent RNA polymerase catalyzes the transcription of DNA into RNA using the four ribonucleoside triphosphates as substrates. The sequence is that of DNA-directed RNA polymerase subunit alpha from Actinobacillus succinogenes (strain ATCC 55618 / DSM 22257 / CCUG 43843 / 130Z).